Reading from the N-terminus, the 217-residue chain is Thymidylate kinase (217 aa).

16–23 (GIDGAGKT) contributes to the ATP binding site.

Belongs to the thymidylate kinase family.

It carries out the reaction dTMP + ATP = dTDP + ADP. Phosphorylation of dTMP to form dTDP in both de novo and salvage pathways of dTTP synthesis. This chain is Thymidylate kinase, found in Xylella fastidiosa (strain M23).